A 478-amino-acid polypeptide reads, in one-letter code: Pathogenicity cluster 5 protein d (478 aa).

The signal sequence occupies residues 1 to 19 (MQIQNLIAALAGMAVVAEA). Disordered stretches follow at residues 35 to 89 (RQNK…GQAN) and 299 to 400 (NGGK…GGKG). Residues 38-64 (KGGNNNNNNNNNNNNNNNNNKNNGGNN) are compositionally biased toward low complexity. Residues 65 to 89 (QLCLNPNNVQKGSQQAGTPKQGQAN) are compositionally biased toward polar residues. Residues 316–326 (NNDGGGGGNDG) are compositionally biased toward gly residues. 2 stretches are compositionally biased toward low complexity: residues 327 to 348 (GNNS…QNGA) and 379 to 393 (TQAG…TNGN). N-linked (GlcNAc...) asparagine glycosylation is found at Asn328 and Asn332.

The protein localises to the secreted. Its function is as follows. Secreted protein required for appressorial penetration of intact host epidermal cells and for pathogenicit, but not for subsequent biotrophic and necrotrophic colonization of leaves. This is Pathogenicity cluster 5 protein d from Colletotrichum graminicola (strain M1.001 / M2 / FGSC 10212) (Maize anthracnose fungus).